A 521-amino-acid chain; its full sequence is uncharacterized protein (521 aa).

10 helical membrane-spanning segments follow: residues 103–123 (NLML…VPMP), 136–156 (FWFF…LWIT), 177–197 (YILF…FTAW), 200–220 (ITFT…GISF), 259–279 (AYAH…VYIV), 299–319 (IMYV…SSWI), 327–346 (YALV…VYVR), 358–378 (FVLV…LITM), 411–431 (CVAS…LHFG), and 450–470 (FKLT…ASYL).

It localises to the membrane. This is an uncharacterized protein from Schizosaccharomyces pombe (strain 972 / ATCC 24843) (Fission yeast).